The sequence spans 1513 residues: DNA polymerase alpha catalytic subunit (1513 aa).

The interval S235–D254 is disordered. The Zn(2+) site is built by C1344, C1347, C1370, C1373, C1404, C1409, C1422, and C1427. The CysA-type zinc finger occupies C1344 to C1373. Residues C1404 to C1427 carry the CysB motif motif.

Belongs to the DNA polymerase type-B family.

Its subcellular location is the nucleus. It carries out the reaction DNA(n) + a 2'-deoxyribonucleoside 5'-triphosphate = DNA(n+1) + diphosphate. In terms of biological role, polymerase alpha in a complex with DNA primase is a replicative polymerase. In Oxytricha trifallax (Sterkiella histriomuscorum), this protein is DNA polymerase alpha catalytic subunit.